A 581-amino-acid polypeptide reads, in one-letter code: Coiled-coil domain-containing protein 102A (581 aa).

Disordered stretches follow at residues 1–61 (MNHT…GLGC), 156–219 (QRVR…IGTD), 496–517 (QAED…SLDE), and 534–581 (SRLR…LQIP). The span at 39–59 (TPSPSGGTPSSSPPLLLSPGL) shows a compositional bias: low complexity. A coiled-coil region spans residues 70 to 164 (REELRLRELE…AQRVRAEQSS (95 aa)). Residues 161–184 (EQSSPENASTAPESISSTASTHSN) show a composition bias toward polar residues. Over residues 185-202 (QPREAEIKQDNQDEEGVR) the composition is skewed to basic and acidic residues. Residues 270-541 (AALEEDTSKL…LQSRLRRQQN (272 aa)) adopt a coiled-coil conformation. Acidic residues predominate over residues 559-581 (EDADGPPSDPDEDEEEELQLQIP).

This Danio rerio (Zebrafish) protein is Coiled-coil domain-containing protein 102A (ccdc102a).